The chain runs to 194 residues: dCTP deaminase, dUMP-forming (194 aa).

DCTP contacts are provided by residues 104 to 109 (RSSLGR), Asp-122, 130 to 132 (TLE), Gln-151, Tyr-165, Lys-172, and Gln-176. The Proton donor/acceptor role is filled by Glu-132.

This sequence belongs to the dCTP deaminase family. Homotrimer.

The enzyme catalyses dCTP + 2 H2O = dUMP + NH4(+) + diphosphate. Its pathway is pyrimidine metabolism; dUMP biosynthesis; dUMP from dCTP: step 1/1. Functionally, bifunctional enzyme that catalyzes both the deamination of dCTP to dUTP and the hydrolysis of dUTP to dUMP without releasing the toxic dUTP intermediate. The protein is dCTP deaminase, dUMP-forming of Dictyoglomus turgidum (strain DSM 6724 / Z-1310).